An 88-amino-acid chain; its full sequence is Small ribosomal subunit protein uS15c (88 aa).

This sequence belongs to the universal ribosomal protein uS15 family. In terms of assembly, part of the 30S ribosomal subunit.

Its subcellular location is the plastid. The protein localises to the chloroplast. The polypeptide is Small ribosomal subunit protein uS15c (rps15) (Calycanthus floridus var. glaucus (Eastern sweetshrub)).